A 94-amino-acid polypeptide reads, in one-letter code: Acylphosphatase (94 aa).

Residues 3 to 90 enclose the Acylphosphatase-like domain; the sequence is RVHVIVEGRV…PDEKQFRIMY (88 aa). Catalysis depends on residues Arg-18 and Asn-36.

This sequence belongs to the acylphosphatase family.

The catalysed reaction is an acyl phosphate + H2O = a carboxylate + phosphate + H(+). This is Acylphosphatase (acyP) from Geobacillus thermodenitrificans (strain NG80-2).